The chain runs to 447 residues: Eukaryotic translation initiation factor 3 subunit E (447 aa).

Residues 253 to 421 (LELFFNAGYI…GTVVMNHPPS (169 aa)) enclose the PCI domain.

It belongs to the eIF-3 subunit E family. Component of the eukaryotic translation initiation factor 3 (eIF-3) complex.

It localises to the cytoplasm. Component of the eukaryotic translation initiation factor 3 (eIF-3) complex, which is involved in protein synthesis of a specialized repertoire of mRNAs and, together with other initiation factors, stimulates binding of mRNA and methionyl-tRNAi to the 40S ribosome. The eIF-3 complex specifically targets and initiates translation of a subset of mRNAs involved in cell proliferation. The sequence is that of Eukaryotic translation initiation factor 3 subunit E from Chaetomium globosum (strain ATCC 6205 / CBS 148.51 / DSM 1962 / NBRC 6347 / NRRL 1970) (Soil fungus).